The sequence spans 695 residues: U1 snRNP-associated protein usp107 (695 aa).

A compositionally biased stretch (basic and acidic residues) spans 85 to 96; the sequence is RDNESQQKDRKN. A disordered region spans residues 85-134; that stretch reads RDNESQQKDRKNLPRNQKSNEIQEKQTFQTPSSEKSTTERESRPFVPPNS. A compositionally biased stretch (polar residues) spans 98 to 113; it reads PRNQKSNEIQEKQTFQ. In terms of domain architecture, RRM spans 139–221; the sequence is RMLFIGNIPK…PSTRLSLITD (83 aa). A coiled-coil region spans residues 265-369; it reads DVRSRIERAA…NLLSKHRISR (105 aa). Basic and acidic residues-rich tracts occupy residues 487-506 and 548-561; these read EEDA…RTRG and SERR…RLLL. 2 disordered regions span residues 487–509 and 540–590; these read EEDA…GEGA and QTKK…AEKT. Residues 605–695 form the PWI domain; it reads ESLWALPIDW…HVLLILRSEA (91 aa).

As to quaternary structure, component of the U1 snRNP particle, a subcomplex of the spliceosome. Interacts with prp5 and usp102.

It localises to the cytoplasm. Its subcellular location is the nucleus. Its function is as follows. Component of the U1 snRNP particle, which recognizes and binds the 5'-splice site of pre-mRNA. Together with other non-snRNP factors, U1 snRNP forms the spliceosomal commitment complex, that targets pre-mRNA to the splicing pathway. In Schizosaccharomyces pombe (strain 972 / ATCC 24843) (Fission yeast), this protein is U1 snRNP-associated protein usp107 (usp107).